The following is a 300-amino-acid chain: Zinc finger CCCH-type antiviral protein 1-like (300 aa).

Position 2 is an N-acetylalanine (alanine 2). A compositionally biased stretch (polar residues) spans asparagine 252–serine 263. The tract at residues asparagine 252–lysine 300 is disordered. Residues valine 271–alanine 283 are compositionally biased toward low complexity.

This Homo sapiens (Human) protein is Zinc finger CCCH-type antiviral protein 1-like (ZC3HAV1L).